The following is a 265-amino-acid chain: Small ribosomal subunit protein uS2 (265 aa).

This sequence belongs to the universal ribosomal protein uS2 family.

The protein is Small ribosomal subunit protein uS2 of Microcystis aeruginosa (strain NIES-843 / IAM M-2473).